The chain runs to 86 residues: Chymotrypsin inhibitor (86 aa).

The signal sequence occupies residues 1 to 22 (MKLLFAIVALLALAFLCADISA).

This sequence belongs to the protease inhibitor I13 (potato type I serine protease inhibitor) family. As to quaternary structure, monomer. Expressed in the body wall, coelomocytes and at a lower level in intestine.

The protein localises to the secreted. Its function is as follows. Inhibits L.terrestris digestive chymotrypsin LT_CH 1 and bovine alpha-chymotrypsin. This Lumbricus terrestris (Common earthworm) protein is Chymotrypsin inhibitor.